Reading from the N-terminus, the 615-residue chain is Zinc finger protein 181 (615 aa).

One can recognise a KRAB domain in the interval 48–120; the sequence is VTFSDVAIDF…EKKLSKGLIP (73 aa). Residues lysine 153 and lysine 170 each participate in a glycyl lysine isopeptide (Lys-Gly) (interchain with G-Cter in SUMO2) cross-link. 11 consecutive C2H2-type zinc fingers follow at residues 281–303, 309–331, 337–359, 365–387, 393–415, 421–443, 449–471, 477–499, 505–527, 533–555, and 561–583; these read YTCS…WRIH, YECR…LISH, YKCI…QSTH, YECM…LRIH, YECR…QKIH, YECR…QRIH, YECN…QSIH, FECQ…LRNH, YECS…HRIH, YECI…QRIH, and YKCN…QRVH.

Belongs to the krueppel C2H2-type zinc-finger protein family.

It localises to the nucleus. In terms of biological role, may be involved in transcriptional regulation. This Pongo abelii (Sumatran orangutan) protein is Zinc finger protein 181 (ZNF181).